The sequence spans 202 residues: Guanylyl cyclase-activating protein 1 (202 aa).

Residue glycine 2 is the site of N-myristoyl glycine attachment. The residue at position 3 (asparagine 3) is a Deamidated asparagine. EF-hand domains lie at 31–49, 51–86, 87–122, and 131–166; these read SGQL…KNLS, SASQ…VLKG, KVEQ…IRTI, and SAEE…DQML. Aspartate 64, asparagine 66, aspartate 68, tyrosine 70, glutamate 75, aspartate 100, aspartate 102, asparagine 104, cysteine 106, glutamate 111, aspartate 144, asparagine 146, aspartate 148, glutamate 150, and glutamate 155 together coordinate Ca(2+).

In terms of assembly, homodimer. As to expression, in the retina, expressed in rod photoreceptors (at protein level). Expressed in cone photoreceptors.

The protein localises to the membrane. It localises to the photoreceptor inner segment. Its subcellular location is the cell projection. The protein resides in the cilium. It is found in the photoreceptor outer segment. Its function is as follows. Stimulates retinal guanylyl cyclase when free calcium ions concentration is low and inhibits guanylyl cyclase when free calcium ions concentration is elevated. This Ca(2+)-sensitive regulation of retinal guanylyl cyclase is a key event in recovery of the dark state of rod photoreceptors following light exposure. May be involved in cone photoreceptor light response and recovery of response in bright light. The protein is Guanylyl cyclase-activating protein 1 (Guca1a) of Mus musculus (Mouse).